The primary structure comprises 338 residues: 4'-phosphopantetheinyl transferase (338 aa).

This sequence belongs to the P-Pant transferase superfamily.

The catalysed reaction is apo-[ACP] + CoA = holo-[ACP] + adenosine 3',5'-bisphosphate + H(+). Acyl-carrier-protein synthase that transfers the 4'-phosphopantetheine moiety from coenzyme A to a Ser of an acyl-carrier-protein. The 4'-phosphopantetheine (4'-PPT) portion of CoA provides the essential prosthetic group for a number of carrier proteins and multi-domain enzymes, priming them for the acceptance of acyl building blocks in fatty acid synthesis and many aspects of secondary metabolism mediated by polyketide synthases (PKSs) and non-ribosomal peptide synthetases (NRPSs). Plays a key role in liamocins biosynthesis by activationg the HR-PKS PKS1 that produces 3,5-dihydroxydecanoic acid, a precursor of liamocins. This Aureobasidium melanogenum (Aureobasidium pullulans var. melanogenum) protein is 4'-phosphopantetheinyl transferase.